The primary structure comprises 504 residues: Protoporphyrinogen oxidase, mitochondrial (504 aa).

FAD is bound by residues 20-25, 43-44, Lys51, and 65-68; these read GAGVSG, EA, and GANT. A disordered region spans residues 213-232; the sequence is SPKNEKKQGPPKTSANKKRQ. FAD is bound by residues Val264 and 473–475; that span reads LSV.

This sequence belongs to the protoporphyrinogen/coproporphyrinogen oxidase family. Protoporphyrinogen oxidase subfamily. It depends on FAD as a cofactor.

The protein resides in the mitochondrion. The catalysed reaction is protoporphyrinogen IX + 3 O2 = protoporphyrin IX + 3 H2O2. It participates in porphyrin-containing compound metabolism; protoporphyrin-IX biosynthesis; protoporphyrin-IX from protoporphyrinogen-IX: step 1/1. Its activity is regulated as follows. Inhibited by the herbicide acifluorfen. Functionally, catalyzes the 6-electron oxidation of protoporphyrinogen-IX to form protoporphyrin-IX. Provides precursor for the mitochondrial and plastidic heme synthesis and the predominant chlorophyll synthesis in plastids. This is Protoporphyrinogen oxidase, mitochondrial (PPXII) from Nicotiana tabacum (Common tobacco).